The chain runs to 246 residues: Acetoacetate decarboxylase (246 aa).

Lys-116 serves as the catalytic Schiff-base intermediate with acetoacetate.

It belongs to the ADC family.

The catalysed reaction is acetoacetate + H(+) = acetone + CO2. Catalyzes the conversion of acetoacetate to acetone and carbon dioxide. The sequence is that of Acetoacetate decarboxylase from Clostridium botulinum (strain Eklund 17B / Type B).